A 56-amino-acid chain; its full sequence is Arcadin-3 (56 aa).

It is found in the cytoplasm. The protein localises to the cytoskeleton. Its function is as follows. Part of an actin-like archaeal cytoskeleton. The protein is Arcadin-3 of Pyrobaculum calidifontis (strain DSM 21063 / JCM 11548 / VA1).